Reading from the N-terminus, the 130-residue chain is MSEIRSELKYLSSHEWARVEEDGTVTIGITDHAQEALGDVVFVETPEVGSQVSAGEEAGVVESVKAASDIYSPVTGEVIAVNELLEEAPETVNESPYDEGWFFKVKPSDVSELDGAMDSEAYVKSVEDDS.

Positions 24-106 (TVTIGITDHA…YDEGWFFKVK (83 aa)) constitute a Lipoyl-binding domain. An N6-lipoyllysine modification is found at Lys-65.

The protein belongs to the GcvH family. As to quaternary structure, the glycine cleavage system is composed of four proteins: P, T, L and H. It depends on (R)-lipoate as a cofactor.

Functionally, the glycine cleavage system catalyzes the degradation of glycine. The H protein shuttles the methylamine group of glycine from the P protein to the T protein. The sequence is that of Glycine cleavage system H protein from Teredinibacter turnerae (strain ATCC 39867 / T7901).